The sequence spans 187 residues: MLNKLIESLKNAPIIMKGDYPYFIHPLTDGVPELDPDIVREAVSGIIRIADLDVDKIVTIEAMGIPVATALSLAVNIPIVVVRKRSYGFPNEIVVDQQTGYSKGKLYINGIDKGDEVIVVDDVISTGGTALATLKALEKAGAIVKDFVTVIEKGDGAEKLRKMGYKIKSLVKIEVSKDGVKIVDHLR.

This sequence belongs to the purine/pyrimidine phosphoribosyltransferase family. Archaeal HPRT subfamily. As to quaternary structure, homodimer.

The protein localises to the cytoplasm. The catalysed reaction is IMP + diphosphate = hypoxanthine + 5-phospho-alpha-D-ribose 1-diphosphate. It catalyses the reaction GMP + diphosphate = guanine + 5-phospho-alpha-D-ribose 1-diphosphate. Its pathway is purine metabolism; IMP biosynthesis via salvage pathway; IMP from hypoxanthine: step 1/1. In terms of biological role, catalyzes a salvage reaction resulting in the formation of IMP that is energically less costly than de novo synthesis. In Ferroglobus placidus (strain DSM 10642 / AEDII12DO), this protein is Hypoxanthine/guanine phosphoribosyltransferase.